A 239-amino-acid chain; its full sequence is 1-(5-phosphoribosyl)-5-[(5-phosphoribosylamino)methylideneamino] imidazole-4-carboxamide isomerase (239 aa).

The active-site Proton acceptor is Asp-8. Residue Asp-129 is the Proton donor of the active site.

Belongs to the HisA/HisF family.

The protein localises to the cytoplasm. The enzyme catalyses 1-(5-phospho-beta-D-ribosyl)-5-[(5-phospho-beta-D-ribosylamino)methylideneamino]imidazole-4-carboxamide = 5-[(5-phospho-1-deoxy-D-ribulos-1-ylimino)methylamino]-1-(5-phospho-beta-D-ribosyl)imidazole-4-carboxamide. It functions in the pathway amino-acid biosynthesis; L-histidine biosynthesis; L-histidine from 5-phospho-alpha-D-ribose 1-diphosphate: step 4/9. The protein is 1-(5-phosphoribosyl)-5-[(5-phosphoribosylamino)methylideneamino] imidazole-4-carboxamide isomerase of Cereibacter sphaeroides (strain ATCC 17029 / ATH 2.4.9) (Rhodobacter sphaeroides).